A 155-amino-acid chain; its full sequence is Small ribosomal subunit protein uS7 (155 aa).

Belongs to the universal ribosomal protein uS7 family. Part of the 30S ribosomal subunit. Contacts proteins S9 and S11.

Its function is as follows. One of the primary rRNA binding proteins, it binds directly to 16S rRNA where it nucleates assembly of the head domain of the 30S subunit. Is located at the subunit interface close to the decoding center, probably blocks exit of the E-site tRNA. This chain is Small ribosomal subunit protein uS7, found in Fervidobacterium nodosum (strain ATCC 35602 / DSM 5306 / Rt17-B1).